Consider the following 429-residue polypeptide: Histidinol dehydrogenase (429 aa).

The NAD(+) site is built by Y130, Q191, and N214. Residues S237, Q259, and H262 each contribute to the substrate site. 2 residues coordinate Zn(2+): Q259 and H262. Catalysis depends on proton acceptor residues E327 and H328. Positions 328, 361, 415, and 420 each coordinate substrate. A Zn(2+)-binding site is contributed by D361. A Zn(2+)-binding site is contributed by H420.

It belongs to the histidinol dehydrogenase family. The cofactor is Zn(2+).

It carries out the reaction L-histidinol + 2 NAD(+) + H2O = L-histidine + 2 NADH + 3 H(+). It participates in amino-acid biosynthesis; L-histidine biosynthesis; L-histidine from 5-phospho-alpha-D-ribose 1-diphosphate: step 9/9. Functionally, catalyzes the sequential NAD-dependent oxidations of L-histidinol to L-histidinaldehyde and then to L-histidine. This is Histidinol dehydrogenase from Neisseria meningitidis serogroup A / serotype 4A (strain DSM 15465 / Z2491).